The chain runs to 654 residues: Acetyl-coenzyme A synthetase (654 aa).

CoA-binding positions include Arg190–Lys193 and Thr313. ATP-binding positions include Gly389–Pro391, Asp413–Thr418, Asp504, and Arg519. CoA is bound at residue Ser527. Position 530 (Arg530) interacts with ATP. Residues Val541 and Val546 each contribute to the Mg(2+) site. The residue at position 613 (Lys613) is an N6-acetyllysine.

It belongs to the ATP-dependent AMP-binding enzyme family. It depends on Mg(2+) as a cofactor. Post-translationally, acetylated. Deacetylation by the SIR2-homolog deacetylase activates the enzyme.

The catalysed reaction is acetate + ATP + CoA = acetyl-CoA + AMP + diphosphate. Functionally, catalyzes the conversion of acetate into acetyl-CoA (AcCoA), an essential intermediate at the junction of anabolic and catabolic pathways. AcsA undergoes a two-step reaction. In the first half reaction, AcsA combines acetate with ATP to form acetyl-adenylate (AcAMP) intermediate. In the second half reaction, it can then transfer the acetyl group from AcAMP to the sulfhydryl group of CoA, forming the product AcCoA. In Leptospira borgpetersenii serovar Hardjo-bovis (strain JB197), this protein is Acetyl-coenzyme A synthetase.